Here is a 283-residue protein sequence, read N- to C-terminus: NFU1 iron-sulfur cluster scaffold homolog, mitochondrial (283 aa).

The transit peptide at 1–65 (MSKFLSQAAI…ELRMPVACRR (65 aa)) directs the protein to the mitochondrion. The tract at residues 182-250 (IKELLDTRIR…IPEVESVEQV (69 aa)) is nifU. [4Fe-4S] cluster-binding residues include Cys219 and Cys222.

It belongs to the NifU family.

Its subcellular location is the mitochondrion. Its function is as follows. Molecular scaffold for [Fe-S] cluster assembly of mitochondrial iron-sulfur proteins. The polypeptide is NFU1 iron-sulfur cluster scaffold homolog, mitochondrial (Drosophila simulans (Fruit fly)).